We begin with the raw amino-acid sequence, 497 residues long: Tripartite motif-containing protein 5 (497 aa).

A2 is modified (N-acetylalanine). An RING-type zinc finger spans residues 15–60 (CPICLELLTEPLSLHCGHSFCQACITANHKKSMLYKEGERSCPVCR). Position 87 is a phosphoserine (S87). The B box-type zinc-finger motif lies at 92-133 (QKVDHCARHGEKLLLFCQEDSKVICWLCERSQEHRGHHTFLM). Residues C97, H100, C119, and H125 each contribute to the Zn(2+) site. A coiled-coil region spans residues 137 to 225 (AQEYHVKLQT…LTKSETEMVQ (89 aa)). A required for interaction with GABARAP and for autophagy region spans residues 187-200 (FEQLREILDWEESN). The B30.2/SPRY domain maps to 283–497 (LKGMLDMFRE…VPMTLCSPSS (215 aa)).

It belongs to the TRIM/RBCC family. Can form homodimers and homotrimers. In addition to lower-order dimerization, also exhibits a higher-order multimerization and both low- and high-order multimerizations are essential for its restriction activity. Interacts with MAP3K7/TAK1, TAB2 and TAB3. Interacts with HSPA8/HSC70, PSMC2, PSMC4, PSMC5 and PSMD7. Interacts with SQSTM1. Interacts (via B30.2/SPRY domain) with HSPA1A/B. Interacts with TRIM6 and TRIM34. Interacts with BECN1; GABARAP. Interacts with ULK1 (phosphorylated form), GABARAPL1, GABARAPL2, MAP1LC3A and MAP1LC3C. Post-translationally, degraded in a proteasome-independent fashion in the absence of viral infection but in a proteasome-dependent fashion following exposure to restriction sensitive virus. In terms of processing, autoubiquitinated in a RING finger- and UBE2D2-dependent manner. Monoubiquitinated by TRIM21. Deubiquitinated by Yersinia YopJ. Ubiquitination may not lead to proteasomal degradation.

It is found in the cytoplasm. The protein localises to the nucleus. It carries out the reaction S-ubiquitinyl-[E2 ubiquitin-conjugating enzyme]-L-cysteine + [acceptor protein]-L-lysine = [E2 ubiquitin-conjugating enzyme]-L-cysteine + N(6)-ubiquitinyl-[acceptor protein]-L-lysine.. It participates in protein modification; protein ubiquitination. Capsid-specific restriction factor that prevents infection from non-host-adapted retroviruses. Blocks viral replication early in the life cycle, after viral entry but before reverse transcription. In addition to acting as a capsid-specific restriction factor, also acts as a pattern recognition receptor that activates innate immune signaling in response to the retroviral capsid lattice. Binding to the viral capsid triggers its E3 ubiquitin ligase activity, and in concert with the heterodimeric ubiquitin conjugating enzyme complex UBE2V1-UBE2N (also known as UBC13-UEV1A complex) generates 'Lys-63'-linked polyubiquitin chains, which in turn are catalysts in the autophosphorylation of the MAP3K7/TAK1 complex (includes TAK1, TAB2, and TAB3). Activation of the MAP3K7/TAK1 complex by autophosphorylation results in the induction and expression of NF-kappa-B and MAPK-responsive inflammatory genes, thereby leading to an innate immune response in the infected cell. Restricts infection by human immunodeficiency virus type 1 (HIV-1) and simian immunodeficiency virus (SIV-agm). Plays a role in regulating autophagy through activation of autophagy regulator BECN1 by causing its dissociation from its inhibitors BCL2 and TAB2. Also plays a role in autophagy by acting as a selective autophagy receptor which recognizes and targets HIV-1 capsid protein p24 for autophagic destruction. The chain is Tripartite motif-containing protein 5 (TRIM5) from Macaca mulatta (Rhesus macaque).